The chain runs to 66 residues: DNA-directed RNA polymerase subunit Rpo10 (66 aa).

The Zn(2+) site is built by Cys7, Cys10, Cys44, and Cys45.

This sequence belongs to the archaeal Rpo10/eukaryotic RPB10 RNA polymerase subunit family. Part of the RNA polymerase complex. The cofactor is Zn(2+).

It is found in the cytoplasm. The catalysed reaction is RNA(n) + a ribonucleoside 5'-triphosphate = RNA(n+1) + diphosphate. DNA-dependent RNA polymerase (RNAP) catalyzes the transcription of DNA into RNA using the four ribonucleoside triphosphates as substrates. The chain is DNA-directed RNA polymerase subunit Rpo10 from Pyrobaculum islandicum (strain DSM 4184 / JCM 9189 / GEO3).